The sequence spans 104 residues: Nucleoid-associated protein LSL_1227 (104 aa).

Low complexity predominate over residues 1–19; it reads MMMRGMNMQSMMKQMQKLQ. Positions 1–24 are disordered; sequence MMMRGMNMQSMMKQMQKLQKNMKK.

This sequence belongs to the YbaB/EbfC family. As to quaternary structure, homodimer.

The protein localises to the cytoplasm. It localises to the nucleoid. Its function is as follows. Binds to DNA and alters its conformation. May be involved in regulation of gene expression, nucleoid organization and DNA protection. This Ligilactobacillus salivarius (strain UCC118) (Lactobacillus salivarius) protein is Nucleoid-associated protein LSL_1227.